The primary structure comprises 413 residues: Alpha-1-antitrypsin-like protein CM55-SI (413 aa).

Residues 1–24 form the signal peptide; that stretch reads MPSSISWGLLLLAALSCLGPGSLA. Residue glutamine 25 is modified to Pyrrolidone carboxylic acid. N-linked (GlcNAc...) asparagine glycans are attached at residues asparagine 65, asparagine 102, asparagine 165, and asparagine 266. The segment at 368 to 387 is RCL; it reads GGTVLGNIRSILRYEVIFDR.

It belongs to the serpin family. In terms of tissue distribution, expressed in liver.

The sequence is that of Alpha-1-antitrypsin-like protein CM55-SI from Tamias sibiricus (Siberian chipmunk).